The following is a 272-amino-acid chain: 3-methyl-2-oxobutanoate hydroxymethyltransferase (272 aa).

2 residues coordinate Mg(2+): aspartate 51 and aspartate 90. Residues 51–52 (DS), aspartate 90, and lysine 118 contribute to the 3-methyl-2-oxobutanoate site. Glutamate 120 provides a ligand contact to Mg(2+). The active-site Proton acceptor is the glutamate 187.

Belongs to the PanB family. In terms of assembly, homodecamer; pentamer of dimers. Mg(2+) is required as a cofactor.

It is found in the cytoplasm. The enzyme catalyses 3-methyl-2-oxobutanoate + (6R)-5,10-methylene-5,6,7,8-tetrahydrofolate + H2O = 2-dehydropantoate + (6S)-5,6,7,8-tetrahydrofolate. It participates in cofactor biosynthesis; (R)-pantothenate biosynthesis; (R)-pantoate from 3-methyl-2-oxobutanoate: step 1/2. In terms of biological role, catalyzes the reversible reaction in which hydroxymethyl group from 5,10-methylenetetrahydrofolate is transferred onto alpha-ketoisovalerate to form ketopantoate. In Xylella fastidiosa (strain M12), this protein is 3-methyl-2-oxobutanoate hydroxymethyltransferase.